The sequence spans 367 residues: Glutamate 5-kinase (367 aa).

Lysine 8 provides a ligand contact to ATP. Residues serine 49, aspartate 136, and asparagine 148 each contribute to the substrate site. ATP contacts are provided by residues 168 to 169 and 210 to 216; these read TD and TGGMVTK. A PUA domain is found at 275 to 353; the sequence is AGKLYLDEGA…REISTILGYA (79 aa).

This sequence belongs to the glutamate 5-kinase family.

It localises to the cytoplasm. It catalyses the reaction L-glutamate + ATP = L-glutamyl 5-phosphate + ADP. Its pathway is amino-acid biosynthesis; L-proline biosynthesis; L-glutamate 5-semialdehyde from L-glutamate: step 1/2. Its function is as follows. Catalyzes the transfer of a phosphate group to glutamate to form L-glutamate 5-phosphate. This is Glutamate 5-kinase from Nostoc punctiforme (strain ATCC 29133 / PCC 73102).